Reading from the N-terminus, the 109-residue chain is Cell division protein ZapA (109 aa).

The stretch at 22–99 forms a coiled coil; the sequence is EQQDALNLAA…IEQALLEQGR (78 aa).

The protein belongs to the ZapA family. Type 1 subfamily. As to quaternary structure, homodimer. Interacts with FtsZ.

It is found in the cytoplasm. Its function is as follows. Activator of cell division through the inhibition of FtsZ GTPase activity, therefore promoting FtsZ assembly into bundles of protofilaments necessary for the formation of the division Z ring. It is recruited early at mid-cell but it is not essential for cell division. This chain is Cell division protein ZapA, found in Erwinia tasmaniensis (strain DSM 17950 / CFBP 7177 / CIP 109463 / NCPPB 4357 / Et1/99).